The sequence spans 596 residues: Elongation factor 4 (596 aa).

One can recognise a tr-type G domain in the interval 2–184 (KHIRNFSIIA…VIVEQIPPPE (183 aa)). GTP-binding positions include 14 to 19 (DHGKST) and 131 to 134 (NKID).

This sequence belongs to the TRAFAC class translation factor GTPase superfamily. Classic translation factor GTPase family. LepA subfamily.

Its subcellular location is the cell inner membrane. The enzyme catalyses GTP + H2O = GDP + phosphate + H(+). Its function is as follows. Required for accurate and efficient protein synthesis under certain stress conditions. May act as a fidelity factor of the translation reaction, by catalyzing a one-codon backward translocation of tRNAs on improperly translocated ribosomes. Back-translocation proceeds from a post-translocation (POST) complex to a pre-translocation (PRE) complex, thus giving elongation factor G a second chance to translocate the tRNAs correctly. Binds to ribosomes in a GTP-dependent manner. This chain is Elongation factor 4, found in Shewanella sp. (strain MR-7).